Here is a 474-residue protein sequence, read N- to C-terminus: tRNA (guanine(37)-N(1))-methyltransferase (474 aa).

S-adenosyl-L-methionine contacts are provided by residues His-234, 274–275 (DL), 303–304 (DA), and Asn-345. Positions 452-464 (EPEAQCESEEAEE) are enriched in acidic residues. A disordered region spans residues 452-474 (EPEAQCESEEAEEPSSKRIKVDT). Residues 465 to 474 (PSSKRIKVDT) show a composition bias toward basic and acidic residues.

This sequence belongs to the class I-like SAM-binding methyltransferase superfamily. TRM5/TYW2 family. In terms of assembly, monomer.

It localises to the mitochondrion matrix. The protein localises to the nucleus. The protein resides in the cytoplasm. The enzyme catalyses guanosine(37) in tRNA + S-adenosyl-L-methionine = N(1)-methylguanosine(37) in tRNA + S-adenosyl-L-homocysteine + H(+). In terms of biological role, specifically methylates the N1 position of guanosine-37 in various cytoplasmic and mitochondrial tRNAs. Methylation is not dependent on the nature of the nucleoside 5' of the target nucleoside. This is the first step in the biosynthesis of wybutosine (yW), a modified base adjacent to the anticodon of tRNAs and required for accurate decoding. The polypeptide is tRNA (guanine(37)-N(1))-methyltransferase (Caenorhabditis elegans).